The primary structure comprises 472 residues: Serine/threonine-protein kinase ULK3 (472 aa).

Residues 14-270 (FILTERLGSG…FKDFFAHPWV (257 aa)) form the Protein kinase domain. ATP contacts are provided by residues 20–28 (LGSGTYATV) and lysine 44. The Proton acceptor role is filled by aspartate 137. Serine 176 is subject to Phosphoserine. One can recognise an MIT 1 domain in the interval 280–348 (SLAQARALVV…SRAEELKAIV (69 aa)). Phosphoserine; by autocatalysis occurs at positions 350, 384, and 464. Positions 375-444 (RLLAALEVAS…ARAEYLKEQI (70 aa)) constitute an MIT 2 domain.

It belongs to the protein kinase superfamily. Ser/Thr protein kinase family. APG1/unc-51/ULK1 subfamily. Interacts (via protein kinase domain) with SUFU. Post-translationally, autophosphorylated. Autophosphorylation is blocked by interaction with SUFU.

It localises to the cytoplasm. The enzyme catalyses L-seryl-[protein] + ATP = O-phospho-L-seryl-[protein] + ADP + H(+). It carries out the reaction L-threonyl-[protein] + ATP = O-phospho-L-threonyl-[protein] + ADP + H(+). Functionally, serine/threonine protein kinase that acts as a regulator of Sonic hedgehog (SHH) signaling and autophagy. Acts as a negative regulator of SHH signaling in the absence of SHH ligand: interacts with SUFU, thereby inactivating the protein kinase activity and preventing phosphorylation of GLI proteins (GLI1, GLI2 and/or GLI3). Positively regulates SHH signaling in the presence of SHH: dissociates from SUFU, autophosphorylates and mediates phosphorylation of GLI2, activating it and promoting its nuclear translocation. Phosphorylates in vitro GLI2, as well as GLI1 and GLI3, although less efficiently. Also acts as a regulator of autophagy: following cellular senescence, able to induce autophagy. In Mus musculus (Mouse), this protein is Serine/threonine-protein kinase ULK3 (Ulk3).